Consider the following 229-residue polypeptide: UPF0758 protein Cagg_0777 (229 aa).

An MPN domain is found at Pro-105–Gly-227. Positions 176, 178, and 189 each coordinate Zn(2+). The short motif at His-176–Asp-189 is the JAMM motif element.

It belongs to the UPF0758 family.

This chain is UPF0758 protein Cagg_0777, found in Chloroflexus aggregans (strain MD-66 / DSM 9485).